The sequence spans 506 residues: BTB/POZ domain and ankyrin repeat-containing protein NPR5 (506 aa).

The BTB domain occupies 23–131 (SDVTFSVEGR…LYSGQVSLVP (109 aa)). Residues 137–151 (RPGCGERGCWHTHCA) form a C2HC NPR-type zinc finger. Zn(2+) is bound by residues C140, C145, H147, and C150. ANK repeat units follow at residues 278–306 (HKIR…GLNL), 307–337 (DDAL…DVNH), 342–371 (AGKT…DPNV), and 375–409 (DGVT…KLRL). Positions 481–506 (KMNDGGDGDDGGSRGPSSLFSPHGFP) are disordered.

It belongs to the plant 'ANKYRIN-BTB/POZ' family. 'NOOT-BOP-COCH-like' (NBCL) subfamily. In terms of assembly, homodimer. Interacts with TGAL5, TGAL7, TGAL8 and TGAL11.

It is found in the nucleus. Its subcellular location is the cytoplasm. It functions in the pathway protein modification; protein ubiquitination. Its function is as follows. May act as a substrate-specific adapter of an E3 ubiquitin-protein ligase complex (CUL3-RBX1-BTB) which mediates the ubiquitination and subsequent proteasomal degradation of target proteins. Transcriptional co-regulator involved in the promotion of leaf and floral meristem fate and determinacy. Required for the abscission of senescent organs, probably by regulating the cell wall disorganization in abscission zones (AZs, e.g. pulvini at the base of leaves). Maybe involved in defense response against pathogens. This chain is BTB/POZ domain and ankyrin repeat-containing protein NPR5, found in Oryza sativa subsp. japonica (Rice).